Reading from the N-terminus, the 238-residue chain is Probable transcriptional regulatory protein M6_Spy0297 (238 aa).

The protein belongs to the TACO1 family. YeeN subfamily.

The protein localises to the cytoplasm. The sequence is that of Probable transcriptional regulatory protein M6_Spy0297 from Streptococcus pyogenes serotype M6 (strain ATCC BAA-946 / MGAS10394).